Reading from the N-terminus, the 119-residue chain is Large ribosomal subunit protein uL18 (119 aa).

The protein belongs to the universal ribosomal protein uL18 family. Part of the 50S ribosomal subunit; part of the 5S rRNA/L5/L18/L25 subcomplex. Contacts the 5S and 23S rRNAs.

This is one of the proteins that bind and probably mediate the attachment of the 5S RNA into the large ribosomal subunit, where it forms part of the central protuberance. This is Large ribosomal subunit protein uL18 from Xanthomonas oryzae pv. oryzae (strain PXO99A).